A 363-amino-acid polypeptide reads, in one-letter code: Chorismate synthase (363 aa).

Arginine 47 is a binding site for NADP(+). FMN is bound by residues 124-126 (RAS), glycine 286, 301-305 (KPTAT), and arginine 327.

The protein belongs to the chorismate synthase family. As to quaternary structure, homotetramer. Requires FMNH2 as cofactor.

It carries out the reaction 5-O-(1-carboxyvinyl)-3-phosphoshikimate = chorismate + phosphate. Its pathway is metabolic intermediate biosynthesis; chorismate biosynthesis; chorismate from D-erythrose 4-phosphate and phosphoenolpyruvate: step 7/7. Its function is as follows. Catalyzes the anti-1,4-elimination of the C-3 phosphate and the C-6 proR hydrogen from 5-enolpyruvylshikimate-3-phosphate (EPSP) to yield chorismate, which is the branch point compound that serves as the starting substrate for the three terminal pathways of aromatic amino acid biosynthesis. This reaction introduces a second double bond into the aromatic ring system. This Prochlorococcus marinus (strain MIT 9211) protein is Chorismate synthase.